A 470-amino-acid polypeptide reads, in one-letter code: MKEYQTITEISGPLVFVETDEPVGYDDIVEIELSDGETRRGQVLESASDYVAIQVFEGTEGIDRDASVRFLGETMKMPVTEDLLGRVMDGTGQPIDGGPEIVPDERRDIVGEAINPFSREYPEEFIQTGVSAIDGMNTLVRGQKLPIFSASGLPHNDLALQIARQATVPEEEDGEDDEGSEFAVIFGAMGITAEEANEFMDDFERTGALERSVVFMNLADDPAVERTITPRLALTTAEYLAFEKDYHVLVILTDMTNYCEALREIGAAREEVPGRRGYPGYMYTDLAQLYERAGRIEGREGSVTQLPILTMPGDDDTHPIPDLTGYITEGQIYIDRDLNSQGIQPPINVLPSLSRLMDDGIGEGLTRADHADVKDQIFAAYAEGEDLRDLVNIVGREALSELDNKYLDFADRFEEEFVDQGTDTARSIDETLELGWDLLSMLPKDALNRIDEDLIEEHYREDETAETVEA.

It belongs to the ATPase alpha/beta chains family. Has multiple subunits with at least A(3), B(3), C, D, E, F, H, I and proteolipid K(x).

It localises to the cell membrane. In terms of biological role, component of the A-type ATP synthase that produces ATP from ADP in the presence of a proton gradient across the membrane. The B chain is a regulatory subunit. The sequence is that of A-type ATP synthase subunit B from Haloarcula marismortui (strain ATCC 43049 / DSM 3752 / JCM 8966 / VKM B-1809) (Halobacterium marismortui).